Reading from the N-terminus, the 168-residue chain is Nicotinamide-nucleotide adenylyltransferase (168 aa).

It belongs to the archaeal NMN adenylyltransferase family.

It localises to the cytoplasm. The catalysed reaction is beta-nicotinamide D-ribonucleotide + ATP + H(+) = diphosphate + NAD(+). Its pathway is cofactor biosynthesis; NAD(+) biosynthesis; NAD(+) from nicotinamide D-ribonucleotide: step 1/1. In Methanocorpusculum labreanum (strain ATCC 43576 / DSM 4855 / Z), this protein is Nicotinamide-nucleotide adenylyltransferase.